The chain runs to 225 residues: Transcription factor HES-7 (225 aa).

Residues 12 to 69 form the bHLH domain; sequence GPKMLKPLVEKRRRDRINRSLEELRLLLLERTRDQNLRNPKLEKAEILEFAVGYLRER. One can recognise an Orange domain in the interval 92 to 122; it reads YLSGFRECLLRLAAFAHDASPAARSQLFSAL. Residues 124–225 are disordered; sequence GYRRPKPPRP…PPPAFWRPWP (102 aa). 2 stretches are compositionally biased toward pro residues: residues 140 to 149 and 213 to 225; these read LPAPRPPLDP and PSLP…RPWP. The short motif at 221–224 is the WRPW motif element; that stretch reads WRPW.

Transcription repression requires formation of a complex with a corepressor protein of the Groucho/TLE family.

Its subcellular location is the nucleus. Its function is as follows. Transcriptional repressor. Represses transcription from both N box- and E box-containing promoters. May with HES1, cooperatively regulate somite formation in the presomitic mesoderm (PSM). May function as a segmentation clock, which is essential for coordinated somite segmentation. The sequence is that of Transcription factor HES-7 (Hes7) from Mus musculus (Mouse).